A 772-amino-acid polypeptide reads, in one-letter code: Elongin-A (772 aa).

In terms of domain architecture, TFIIS N-terminal spans 4–79; the sequence is ESALQVVEKL…AQWKKLVPVE (76 aa). 2 stretches are compositionally biased toward basic and acidic residues: residues 79-105 and 136-156; these read ERNA…LQKE and LSEL…DERK. Disordered regions lie at residues 79-403 and 418-466; these read ERNA…FEQP and KKKK…EKPA. Ser196 carries the post-translational modification Phosphoserine. Composition is skewed to basic and acidic residues over residues 226 to 235, 253 to 269, 275 to 308, 321 to 343, and 372 to 384; these read QERHLGEPHG, RPVD…VSRE, LSKE…EGSS, SDNH…KSKQ, and PEGK…DRKS. Residues Ser384 and Ser387 each carry the phosphoserine modification. The residue at position 394 (Thr394) is a Phosphothreonine. Position 434 is an N6-acetyllysine (Lys434). Residues 434-443 are compositionally biased toward basic and acidic residues; sequence KGLKKNDSKS. Ser516 carries the phosphoserine modification. Positions 522–681 are activation domain; sequence EAGFTGRRMN…PPRDVRRRQE (160 aa). The BC-box stretch occupies residues 550-559; that stretch reads TLHQQCIRVL. Residues 566-610 enclose the F-box domain; that stretch reads IFEVGGVPYSVLEPVLERCTPDQLYRIEEYNHVLIEETDQLWKVH. The tract at residues 674 to 732 is disordered; sequence RDVRRRQEKFGTGGAAVPEKIKIKPAPYPMGSSHASASSISFNPSPEEPAYDGPSTSSA. Low complexity predominate over residues 705–714; it reads SSHASASSIS.

Heterotrimer of an A (ELOA, ELOA2 or ELOA3P), ELOB and ELOC subunit. Part of a multisubunit ubiquitin ligase complex consisting of elongin BC complex (ELOB and ELOC), elongin A/ELOA, RBX1 and CUL5. Interacts with ERCC6; the interaction is induced by DNA damaging agents or inhibitors of RNA polymerase II elongation. Interacts (via BC-box) with CUL5.

It localises to the nucleus. Functionally, SIII, also known as elongin, is a general transcription elongation factor that increases the RNA polymerase II transcription elongation past template-encoded arresting sites. Subunit A is transcriptionally active and its transcription activity is strongly enhanced by binding to the dimeric complex of the SIII regulatory subunits B and C (elongin BC complex). In terms of biological role, as part of a multisubunit complex composed of elongin BC complex (ELOB and ELOC), elongin A/ELOA, RBX1 and CUL5; polyubiquitinates monoubiquitinated POLR2A. This Homo sapiens (Human) protein is Elongin-A.